The chain runs to 156 residues: MSRRHAAEKREVLPDAKYGDRVLTKFMNNLMIDGKKSVAERIVYSALERVEGRVKRAPVEVFHEALDNVKPSVEVRSRRVGGATYQVPVEVRPSRREALAIRWLINAAKNRNENTMEERLAGELLDAMNSRGSAVKKREDTHKMADANKAFSHYRW.

This sequence belongs to the universal ribosomal protein uS7 family. Part of the 30S ribosomal subunit. Contacts proteins S9 and S11.

Functionally, one of the primary rRNA binding proteins, it binds directly to 16S rRNA where it nucleates assembly of the head domain of the 30S subunit. Is located at the subunit interface close to the decoding center, probably blocks exit of the E-site tRNA. This Rhodobacter capsulatus (Rhodopseudomonas capsulata) protein is Small ribosomal subunit protein uS7.